Reading from the N-terminus, the 271-residue chain is MAGPQQQPPYLHLAELTATQFLEIWKHFDADGNGYIEGKELENFFQELEKARKGSGMVSKSDNLGEKMKEFMQKYDKNSDGKIEMAELAQILPTEENFLLCFRQHVGSSTEFMEAWRKYDTDRSGYIEANELKGFLSDLLKKANRPYDEPKLQEYTQTILRMFDLNGDGKLGLSEMSRLLPVQENFLLKFQGMKLTSEEFNAIFTFYDKDGSGYIDENELDALLKDLYEKNKKEMNIQQLTSYRKSVMSLAEAEKLYRKDLEIVLCSEPPL.

EF-hand domains are found at residues 16–51, 63–98, 107–142, 151–186, 195–230, and 235–270; these read LTAT…LEKA, NLGE…EENF, GSST…LLKK, KLQE…QENF, LTSE…LYEK, and MNIQ…SEPP. Ca(2+) is bound by residues Asp29, Asp31, Asn33, Tyr35, Glu40, Asp76, Asn78, Asp80, Lys82, Glu87, Asp120, Asp122, Ser124, Tyr126, Glu131, Asp164, Asn166, Asp168, Lys170, Glu175, Asp208, Asp210, Ser212, Tyr214, and Glu219. Residue Tyr214 is modified to Phosphotyrosine.

It belongs to the calbindin family.

It localises to the synapse. The protein resides in the cell projection. Its subcellular location is the dendrite. Its function is as follows. Calcium-binding protein involved in calcium homeostasis and signal transduction. It plays a critical role in buffering intracellular calcium levels and modulating calcium-dependent signaling pathways. Predominantly expressed in specific neuronal populations, influences synaptic plasticity and neuronal excitability, contributing to learning and memory. During embryonic development, it facilitates neuronal differentiation and maturation. This Bos taurus (Bovine) protein is Calretinin (CALB2).